We begin with the raw amino-acid sequence, 483 residues long: 3-isopropylmalate dehydratase large subunit (483 aa).

Residues Cys-361, Cys-424, and Cys-427 each coordinate [4Fe-4S] cluster.

The protein belongs to the aconitase/IPM isomerase family. LeuC type 1 subfamily. As to quaternary structure, heterodimer of LeuC and LeuD. [4Fe-4S] cluster serves as cofactor.

It carries out the reaction (2R,3S)-3-isopropylmalate = (2S)-2-isopropylmalate. Its pathway is amino-acid biosynthesis; L-leucine biosynthesis; L-leucine from 3-methyl-2-oxobutanoate: step 2/4. Catalyzes the isomerization between 2-isopropylmalate and 3-isopropylmalate, via the formation of 2-isopropylmaleate. The sequence is that of 3-isopropylmalate dehydratase large subunit from Polaromonas naphthalenivorans (strain CJ2).